Consider the following 363-residue polypeptide: Pyrimidine monooxygenase RutA (363 aa).

Residues 49 to 50 (IK), N115, E124, 140 to 141 (RY), and S190 each bind FMN.

Belongs to the NtaA/SnaA/DszA monooxygenase family. RutA subfamily.

It carries out the reaction uracil + FMNH2 + NADH + O2 = (Z)-3-ureidoacrylate + FMN + NAD(+) + H2O + H(+). The enzyme catalyses thymine + FMNH2 + NADH + O2 = (Z)-2-methylureidoacrylate + FMN + NAD(+) + H2O + H(+). Catalyzes the pyrimidine ring opening between N-3 and C-4 by an unusual flavin hydroperoxide-catalyzed mechanism, adding oxygen atoms in the process to yield ureidoacrylate peracid, that immediately reacts with FMN forming ureidoacrylate and FMN-N(5)-oxide. The FMN-N(5)-oxide reacts spontaneously with NADH to produce FMN. Requires the flavin reductase RutF to regenerate FMN in vivo. The chain is Pyrimidine monooxygenase RutA from Escherichia coli O157:H7 (strain EC4115 / EHEC).